A 441-amino-acid chain; its full sequence is Putative transporter AmpG 1 (441 aa).

The next 12 helical transmembrane spans lie at 5–25 (SHLLIIWLFGLISGFNLMITG), 42–62 (IGILSFITLPYSINFLLAPIF), 78–98 (LSWICLTSTALIFLIYIFSFL), 104–124 (LVLFTFTALIISFFSAAQDTI), 143–163 (GIYIFGYRIGMLLAGSGAIYL), 171–191 (EIYKIFAGLVFIYLILLIVAA), 249–269 (SGNDISLAYFIILILIFLVLY), 297–317 (VGKFWGVVGAIIGGLVGGFIM), 325–345 (SIFLFGIIHALGHILFIFLEI), 352–372 (LLFITIGIESITGGMTMTAYI), 390–410 (FLSSMMGISRSIFPIISGYMV), and 413–433 (FGWQNFFLFTTIITIPSLLIL).

Belongs to the major facilitator superfamily.

Its subcellular location is the cell inner membrane. The protein is Putative transporter AmpG 1 (ampG1) of Rickettsia felis (strain ATCC VR-1525 / URRWXCal2) (Rickettsia azadi).